A 114-amino-acid polypeptide reads, in one-letter code: Cuticle protein AMP5 (114 aa).

Pyrrolidone carboxylic acid is present on Gln-1. Residues 18–83 form the Chitin-binding type R&amp;R domain; that stretch reads AGNYFYEFET…VDSPLIPVAP (66 aa).

In terms of tissue distribution, arthrodial membrane.

The chain is Cuticle protein AMP5 from Homarus americanus (American lobster).